A 238-amino-acid chain; its full sequence is Probable transcriptional regulatory protein IL0164 (238 aa).

The protein belongs to the TACO1 family.

The protein localises to the cytoplasm. In Idiomarina loihiensis (strain ATCC BAA-735 / DSM 15497 / L2-TR), this protein is Probable transcriptional regulatory protein IL0164.